Consider the following 455-residue polypeptide: UDP-N-acetylmuramoylalanine--D-glutamate ligase (455 aa).

119-125 (GTNGKTT) contributes to the ATP binding site.

This sequence belongs to the MurCDEF family.

Its subcellular location is the cytoplasm. The enzyme catalyses UDP-N-acetyl-alpha-D-muramoyl-L-alanine + D-glutamate + ATP = UDP-N-acetyl-alpha-D-muramoyl-L-alanyl-D-glutamate + ADP + phosphate + H(+). It participates in cell wall biogenesis; peptidoglycan biosynthesis. In terms of biological role, cell wall formation. Catalyzes the addition of glutamate to the nucleotide precursor UDP-N-acetylmuramoyl-L-alanine (UMA). The sequence is that of UDP-N-acetylmuramoylalanine--D-glutamate ligase from Listeria innocua serovar 6a (strain ATCC BAA-680 / CLIP 11262).